The following is a 178-amino-acid chain: Large ribosomal subunit protein uL6 (178 aa).

It belongs to the universal ribosomal protein uL6 family. As to quaternary structure, part of the 50S ribosomal subunit.

Its function is as follows. This protein binds to the 23S rRNA, and is important in its secondary structure. It is located near the subunit interface in the base of the L7/L12 stalk, and near the tRNA binding site of the peptidyltransferase center. The polypeptide is Large ribosomal subunit protein uL6 (Helicobacter acinonychis (strain Sheeba)).